Consider the following 96-residue polypeptide: Large ribosomal subunit protein uL23 (96 aa).

It belongs to the universal ribosomal protein uL23 family. As to quaternary structure, part of the 50S ribosomal subunit. Contacts protein L29, and trigger factor when it is bound to the ribosome.

One of the early assembly proteins it binds 23S rRNA. One of the proteins that surrounds the polypeptide exit tunnel on the outside of the ribosome. Forms the main docking site for trigger factor binding to the ribosome. The protein is Large ribosomal subunit protein uL23 of Thermus thermophilus (strain ATCC BAA-163 / DSM 7039 / HB27).